The primary structure comprises 522 residues: Terpineol synthase, chloroplastic (522 aa).

The (2E)-geranyl diphosphate site is built by R242, D279, D283, R414, and N417. 2 residues coordinate Mg(2+): D279 and D283. The DDXXD motif motif lies at 279 to 283 (DDVYD). Mg(2+) contacts are provided by N417, T421, and E425.

This sequence belongs to the terpene synthase family. Tpsb subfamily. Monomer. Mg(2+) serves as cofactor. Mn(2+) is required as a cofactor. As to expression, confined to flowers.

The protein localises to the plastid. The protein resides in the chloroplast. It catalyses the reaction (2E)-geranyl diphosphate + H2O = (S)-alpha-terpineol + diphosphate. The catalysed reaction is (2E)-geranyl diphosphate = sabinene + diphosphate. It carries out the reaction (2E)-geranyl diphosphate = beta-myrcene + diphosphate. The enzyme catalyses (2E)-geranyl diphosphate = limonene + diphosphate. It catalyses the reaction (2E)-geranyl diphosphate + H2O = 1,8-cineole + diphosphate. The catalysed reaction is (2E)-geranyl diphosphate = alpha-pinene + diphosphate. It participates in secondary metabolite biosynthesis; terpenoid biosynthesis. Monoterpene synthase (TPS) involved in the biosynthesis of monoterpene natural products of the 'cineole cassette', volatile compounds present in floral scent. Catalyzes the conversion of (2E)-geranyl diphosphate (GPP) into alpha-terpineol and, as minor products, sabinene, beta-myrcene, limonene, alpha-pinene and 1,8-cineole. This Nicotiana langsdorffii (Langsdorff's tobacco) protein is Terpineol synthase, chloroplastic.